Reading from the N-terminus, the 286-residue chain is ATP synthase gamma chain (286 aa).

Belongs to the ATPase gamma chain family. In terms of assembly, F-type ATPases have 2 components, CF(1) - the catalytic core - and CF(0) - the membrane proton channel. CF(1) has five subunits: alpha(3), beta(3), gamma(1), delta(1), epsilon(1). CF(0) has three main subunits: a, b and c.

The protein resides in the cell inner membrane. Produces ATP from ADP in the presence of a proton gradient across the membrane. The gamma chain is believed to be important in regulating ATPase activity and the flow of protons through the CF(0) complex. This Pseudomonas syringae pv. tomato (strain ATCC BAA-871 / DC3000) protein is ATP synthase gamma chain.